We begin with the raw amino-acid sequence, 565 residues long: Urocanate hydratase (565 aa).

Residues 58 to 59, glutamine 136, 182 to 184, glutamate 202, arginine 207, 245 to 246, 266 to 270, 276 to 277, and tyrosine 325 contribute to the NAD(+) site; these read GG, GMG, NA, QTSAH, and YL. Residue cysteine 413 is part of the active site. Position 495 (glycine 495) interacts with NAD(+).

The protein belongs to the urocanase family. NAD(+) serves as cofactor.

The protein resides in the cytoplasm. It catalyses the reaction 4-imidazolone-5-propanoate = trans-urocanate + H2O. It functions in the pathway amino-acid degradation; L-histidine degradation into L-glutamate; N-formimidoyl-L-glutamate from L-histidine: step 2/3. Its function is as follows. Catalyzes the conversion of urocanate to 4-imidazolone-5-propionate. The protein is Urocanate hydratase of Vibrio cholerae serotype O1 (strain ATCC 39541 / Classical Ogawa 395 / O395).